The following is a 133-amino-acid chain: Small ribosomal subunit protein uS11 (133 aa).

This sequence belongs to the universal ribosomal protein uS11 family. In terms of assembly, part of the 30S ribosomal subunit.

Located on the platform of the 30S subunit. This Pyrobaculum aerophilum (strain ATCC 51768 / DSM 7523 / JCM 9630 / CIP 104966 / NBRC 100827 / IM2) protein is Small ribosomal subunit protein uS11.